A 430-amino-acid chain; its full sequence is Probable FAD-dependent monooxygenase (430 aa).

The N-terminal stretch at 1–23 is a signal peptide; it reads MGSTSTPPHVLIIGAGITGLALA. 9–37 contributes to the FAD binding site; the sequence is HVLIIGAGITGLALAQALRKHGVSFAVYE. 2 N-linked (GlcNAc...) asparagine glycosylation sites follow: Asn-130 and Asn-151. 307–330 contributes to the FAD binding site; that stretch reads LEDWPTPPKGSWSNLGGTATLVGD.

Requires FAD as cofactor.

The chain is Probable FAD-dependent monooxygenase from Arthroderma benhamiae (strain ATCC MYA-4681 / CBS 112371) (Trichophyton mentagrophytes).